The primary structure comprises 504 residues: L-carnitine/gamma-butyrobetaine antiporter (504 aa).

Helical transmembrane passes span 10 to 30 (MEPK…WLTV), 51 to 71 (WGWA…WLVF), 92 to 112 (IFMM…SIEI), 143 to 163 (GPLP…FFFV), 195 to 215 (FYLV…TPLV), 231 to 251 (LDAI…ACGL), 263 to 283 (SYLS…SFIM), 316 to 336 (WSVF…IFLA), 347 to 367 (LCFG…TVLG), 398 to 418 (WAAL…CFIA), 446 to 466 (LLVR…LLAL), and 475 to 495 (AIIA…LSFI).

The protein belongs to the BCCT transporter (TC 2.A.15) family. CaiT subfamily. Homotrimer.

The protein localises to the cell inner membrane. The catalysed reaction is 4-(trimethylamino)butanoate(in) + (R)-carnitine(out) = 4-(trimethylamino)butanoate(out) + (R)-carnitine(in). It functions in the pathway amine and polyamine metabolism; carnitine metabolism. Catalyzes the exchange of L-carnitine for gamma-butyrobetaine. This chain is L-carnitine/gamma-butyrobetaine antiporter, found in Shigella dysenteriae serotype 1 (strain Sd197).